Consider the following 305-residue polypeptide: Zinc transporter ZIP9 (305 aa).

A helical membrane pass occupies residues Ile7–Ala27. A glycan (N-linked (GlcNAc...) asparagine) is linked at Asn29. 5 helical membrane passes run Leu35 to Val55, Ala104 to Gly124, Ile144 to Ala164, Leu174 to Phe194, and His208 to Ser228. N-linked (GlcNAc...) asparagine glycosylation occurs at Asn239. 2 helical membrane passes run Gly242 to Pro262 and Leu284 to His304.

This sequence belongs to the ZIP transporter (TC 2.A.5) family.

The protein resides in the golgi apparatus. The protein localises to the trans-Golgi network membrane. It is found in the cell membrane. Its subcellular location is the cytoplasm. It localises to the perinuclear region. The protein resides in the mitochondrion. The protein localises to the nucleus. The enzyme catalyses Zn(2+)(in) = Zn(2+)(out). Functionally, transports zinc ions across cell and organelle membranes into the cytoplasm and regulates intracellular zinc homeostasis. Participates in the zinc ions efflux out of the secretory compartments. Regulates intracellular zinc level, resulting in the enhancement of AKT1 and MAPK3/MAPK1 (Erk1/2) phosphorylation in response to the BCR activation. Also functions as a membrane androgen receptor that mediates, through a G protein, the non-classical androgen signaling pathway, characterized by the activation of MAPK3/MAPK1 (Erk1/2) and transcription factors CREB1 or ATF1. Moreover, has dual functions as a membrane-bound androgen receptor and as an androgen-dependent zinc transporter both of which are mediated through an inhibitory G protein (Gi) that mediates both MAP kinase and zinc signaling leading to the androgen-dependent apoptotic process. This is Zinc transporter ZIP9 from Gallus gallus (Chicken).